Consider the following 494-residue polypeptide: Glycerol kinase (494 aa).

Threonine 12 contributes to the ADP binding site. Positions 12, 13, and 14 each coordinate ATP. Position 12 (threonine 12) interacts with sn-glycerol 3-phosphate. ADP is bound at residue arginine 16. Sn-glycerol 3-phosphate contacts are provided by arginine 82, glutamate 83, tyrosine 134, and aspartate 243. Arginine 82, glutamate 83, tyrosine 134, aspartate 243, and glutamine 244 together coordinate glycerol. Threonine 265 and glycine 308 together coordinate ADP. The ATP site is built by threonine 265, glycine 308, glutamine 312, and glycine 408. Residues glycine 408 and asparagine 412 each contribute to the ADP site.

This sequence belongs to the FGGY kinase family.

It carries out the reaction glycerol + ATP = sn-glycerol 3-phosphate + ADP + H(+). It functions in the pathway polyol metabolism; glycerol degradation via glycerol kinase pathway; sn-glycerol 3-phosphate from glycerol: step 1/1. With respect to regulation, inhibited by fructose 1,6-bisphosphate (FBP). Key enzyme in the regulation of glycerol uptake and metabolism. Catalyzes the phosphorylation of glycerol to yield sn-glycerol 3-phosphate. The sequence is that of Glycerol kinase from Marinomonas sp. (strain MWYL1).